Reading from the N-terminus, the 704-residue chain is Preterpestacin I synthase tpcA (704 aa).

The tract at residues 1-329 (MEQLSYQSKL…CSACPRQNAW (329 aa)) is terpene cyclase. Residue Asp96 coordinates Mg(2+). Substrate contacts are provided by residues Asp96, Asn231, 235-239 (SWERE), and 325-326 (RQ). The short motif at 96–100 (DDGGE) is the DDXXD 1 element. Residues 231–239 (NDYFSWERE) carry the NSE/DTE motif. A prenyltransferase region spans residues 330–688 (KDMSSQSLNG…MLRLCLAKLS (359 aa)). The disordered stretch occupies residues 361–380 (KDSSFFGSQPSDDEPSLSEV). The isopentenyl diphosphate site is built by Lys406, Arg409, and His438. Asp445 and Asp449 together coordinate Mg(2+). Residues 445–449 (DDLED) carry the DDXXD 2 motif. Position 454 (Arg454) interacts with dimethylallyl diphosphate. Arg455 serves as a coordination point for isopentenyl diphosphate. Residues Lys532, Thr533, Gln568, Asn575, Lys583, and Lys593 each contribute to the dimethylallyl diphosphate site.

The protein in the N-terminal section; belongs to the terpene synthase family. This sequence in the C-terminal section; belongs to the FPP/GGPP synthase family. Hexamer. Mg(2+) is required as a cofactor.

It catalyses the reaction isopentenyl diphosphate + (2E,6E)-farnesyl diphosphate = (2E,6E,10E)-geranylgeranyl diphosphate + diphosphate. It carries out the reaction isopentenyl diphosphate + (2E,6E,10E)-geranylgeranyl diphosphate = (2E,6E,10E,14E)-geranylfarnesyl diphosphate + diphosphate. It functions in the pathway secondary metabolite biosynthesis; terpenoid biosynthesis. Its function is as follows. Bifunctional terpene synthase; part of the gene cluster that mediates the biosynthesis of terpestacin. The bifunctional terpene synthase tpcA converts isopentenyl diphosphate (IPP) and dimethylallyl diphosphate (DMAPP) into the sesterterpene preterpestacin I. The C-terminal prenyltransferase (PT) domain of tpcA catalyzes formation of GFPP, whereas the N-terminal terpene cyclase (TC) domain catalyzes the cyclization of GFPP into preterpestacin I. The cytochrome P450 monooxygenase tpcB then hydroxylates preterpestacin I to yield 24-hydroxypreterpstacin I (renamed as preterpestacin II) whereas the cytochrome P450 monooxygenase tpcC further hydroxylates preterpestacin II to yield 16,17-dihydroxypreterpestacin II (renamed as preterpestacin III). Finally, the FAD-dependent monooxygenase tpcD converts preterpestacin III into terpestacin. This chain is Preterpestacin I synthase tpcA, found in Cochliobolus heterostrophus (strain C5 / ATCC 48332 / race O) (Southern corn leaf blight fungus).